The primary structure comprises 280 residues: 2-dehydro-3-deoxyphosphooctonate aldolase (280 aa).

The protein belongs to the KdsA family.

It is found in the cytoplasm. It carries out the reaction D-arabinose 5-phosphate + phosphoenolpyruvate + H2O = 3-deoxy-alpha-D-manno-2-octulosonate-8-phosphate + phosphate. Its pathway is carbohydrate biosynthesis; 3-deoxy-D-manno-octulosonate biosynthesis; 3-deoxy-D-manno-octulosonate from D-ribulose 5-phosphate: step 2/3. It functions in the pathway bacterial outer membrane biogenesis; lipopolysaccharide biosynthesis. This is 2-dehydro-3-deoxyphosphooctonate aldolase from Colwellia psychrerythraea (strain 34H / ATCC BAA-681) (Vibrio psychroerythus).